The sequence spans 766 residues: 5-methyltetrahydropteroyltriglutamate--homocysteine methyltransferase (766 aa).

5-methyltetrahydropteroyltri-L-glutamate contacts are provided by residues 23–26 (RELK) and Lys121. L-homocysteine-binding positions include 438-440 (IGS) and Glu491. L-methionine is bound by residues 438 to 440 (IGS) and Glu491. Residues 522–523 (RC) and Trp568 contribute to the 5-methyltetrahydropteroyltri-L-glutamate site. Asp606 contacts L-homocysteine. Position 606 (Asp606) interacts with L-methionine. Glu612 is a 5-methyltetrahydropteroyltri-L-glutamate binding site. Zn(2+)-binding residues include His648, Cys650, and Glu672. The Proton donor role is filled by His701. Position 733 (Cys733) interacts with Zn(2+).

This sequence belongs to the vitamin-B12 independent methionine synthase family. Zn(2+) is required as a cofactor.

It carries out the reaction 5-methyltetrahydropteroyltri-L-glutamate + L-homocysteine = tetrahydropteroyltri-L-glutamate + L-methionine. Its pathway is amino-acid biosynthesis; L-methionine biosynthesis via de novo pathway; L-methionine from L-homocysteine (MetE route): step 1/1. In terms of biological role, catalyzes the transfer of a methyl group from 5-methyltetrahydrofolate to homocysteine resulting in methionine formation. The protein is 5-methyltetrahydropteroyltriglutamate--homocysteine methyltransferase of Photobacterium profundum (strain SS9).